The primary structure comprises 520 residues: DnaJ homolog l(2)tid, mitochondrial (520 aa).

The N-terminal 62 residues, 1–62 (MMISCKKLFV…RRLHTTRDLL (62 aa)), are a transit peptide targeting the mitochondrion. Arginine 30 carries the post-translational modification Omega-N-methylarginine. Positions 65–130 (DYYATLGVAK…QKRREYDTYG (66 aa)) constitute a J domain. Position 106 is an N6-acetyllysine (lysine 106). The CR-type zinc finger occupies 214–292 (GVNKDVNVNV…CEGKGRTVQR (79 aa)). Zn(2+) contacts are provided by cysteine 227, cysteine 230, cysteine 244, cysteine 247, cysteine 266, cysteine 269, cysteine 280, and cysteine 283. Residues 227 to 234 (CPKCAGTK) form a CXXCXGXG motif; approximate repeat. The stretch at 244 to 251 (CQYCNGTG) is one CXXCXGXG motif repeat. The CXXCXGXG motif; approximate repeat unit spans residues 266–273 (CRYCQGTR). A CXXCXGXG motif repeat occupies 280-287 (CSECEGKG). Residues 430–520 (QIHGIANRKD…FISKIKSMFN (91 aa)) are disordered. The span at 446 to 476 (AGASEEPGAGAAAKASAAAAGSGASKPGPGA) shows a compositional bias: low complexity. Positions 479 to 495 (SEGKDQWTDNKKTKAKE) are enriched in basic and acidic residues. The segment covering 496 to 511 (GGGSGSGQGDGGGGGF) has biased composition (gly residues).

As to quaternary structure, interacts with ptc (via C-terminal cytoplasmic region); the interaction is probably direct. Interacts with hh/hedgehog; the interaction is probably mediated by the hedgehog receptor ptc. Appears to produce proteins of differing size. Predicted to have a molecular mass of 56 kDa (TID56) however proteins of 50 kDa, 47 kDa and 40 kDa have been identified and named TID50, TID47 and TID40. TID50 and TID40 localize to the mitochondria while TID47 localizes to the cytoplasm. TID50 is probably TID56 that has undergone mitochondrial transit peptide processing. TID40 and TID47 may be alternately processed proteins or may be isoforms resulting from alternative splicing. In terms of tissue distribution, ubiquitously expressed throughout embryonic development. In larvae, expression is seen in sensory organs, gopplet cells, gonads, imaginal disks, proventriculus, fat body, hematopoietic organ, midgut, Malpighian tubules and ring gland.

It localises to the cytoplasm. It is found in the cytosol. The protein resides in the mitochondrion. Its subcellular location is the mitochondrion outer membrane. In terms of biological role, involved in hh/hedgehog signaling. May act as a tumor suppressor in larval imaginal disks. The polypeptide is DnaJ homolog l(2)tid, mitochondrial (Drosophila melanogaster (Fruit fly)).